The following is a 154-amino-acid chain: 6,7-dimethyl-8-ribityllumazine synthase (154 aa).

5-amino-6-(D-ribitylamino)uracil contacts are provided by residues phenylalanine 23, 57–59, and 81–83; these read AFE and AVI. 86–87 is a (2S)-2-hydroxy-3-oxobutyl phosphate binding site; the sequence is AT. Histidine 89 serves as the catalytic Proton donor. Residue phenylalanine 114 participates in 5-amino-6-(D-ribitylamino)uracil binding. Arginine 128 serves as a coordination point for (2S)-2-hydroxy-3-oxobutyl phosphate.

Belongs to the DMRL synthase family.

It carries out the reaction (2S)-2-hydroxy-3-oxobutyl phosphate + 5-amino-6-(D-ribitylamino)uracil = 6,7-dimethyl-8-(1-D-ribityl)lumazine + phosphate + 2 H2O + H(+). It functions in the pathway cofactor biosynthesis; riboflavin biosynthesis; riboflavin from 2-hydroxy-3-oxobutyl phosphate and 5-amino-6-(D-ribitylamino)uracil: step 1/2. Its function is as follows. Catalyzes the formation of 6,7-dimethyl-8-ribityllumazine by condensation of 5-amino-6-(D-ribitylamino)uracil with 3,4-dihydroxy-2-butanone 4-phosphate. This is the penultimate step in the biosynthesis of riboflavin. The sequence is that of 6,7-dimethyl-8-ribityllumazine synthase from Nautilia profundicola (strain ATCC BAA-1463 / DSM 18972 / AmH).